Here is a 97-residue protein sequence, read N- to C-terminus: UPF0235 protein LHK_03181 (97 aa).

The protein belongs to the UPF0235 family.

In Laribacter hongkongensis (strain HLHK9), this protein is UPF0235 protein LHK_03181.